We begin with the raw amino-acid sequence, 130 residues long: Methylglyoxal synthase (130 aa).

The MGS-like domain maps to 1 to 130 (MSKPRIALIA…DLARNMQDVC (130 aa)). Substrate-binding positions include H11, K15, 37–40 (TGTT), and 57–58 (SG). Residue D63 is the Proton donor/acceptor of the active site. H90 lines the substrate pocket.

The protein belongs to the methylglyoxal synthase family.

The catalysed reaction is dihydroxyacetone phosphate = methylglyoxal + phosphate. Its function is as follows. Catalyzes the formation of methylglyoxal from dihydroxyacetone phosphate. The chain is Methylglyoxal synthase from Burkholderia vietnamiensis (strain G4 / LMG 22486) (Burkholderia cepacia (strain R1808)).